A 237-amino-acid polypeptide reads, in one-letter code: UPF0174 protein YaaW (237 aa).

This sequence belongs to the UPF0174 family.

The sequence is that of UPF0174 protein YaaW (yaaW) from Escherichia coli (strain K12).